A 181-amino-acid polypeptide reads, in one-letter code: Adenine phosphoribosyltransferase (181 aa).

Belongs to the purine/pyrimidine phosphoribosyltransferase family. In terms of assembly, homodimer.

The protein resides in the cytoplasm. The catalysed reaction is AMP + diphosphate = 5-phospho-alpha-D-ribose 1-diphosphate + adenine. Its pathway is purine metabolism; AMP biosynthesis via salvage pathway; AMP from adenine: step 1/1. Catalyzes a salvage reaction resulting in the formation of AMP, that is energically less costly than de novo synthesis. This chain is Adenine phosphoribosyltransferase, found in Mesorhizobium japonicum (strain LMG 29417 / CECT 9101 / MAFF 303099) (Mesorhizobium loti (strain MAFF 303099)).